The primary structure comprises 609 residues: UvrABC system protein C (609 aa).

Residues Thr15 to Val92 form the GIY-YIG domain. One can recognise a UVR domain in the interval Asp202 to Leu237.

This sequence belongs to the UvrC family. In terms of assembly, interacts with UvrB in an incision complex.

The protein resides in the cytoplasm. Its function is as follows. The UvrABC repair system catalyzes the recognition and processing of DNA lesions. UvrC both incises the 5' and 3' sides of the lesion. The N-terminal half is responsible for the 3' incision and the C-terminal half is responsible for the 5' incision. The polypeptide is UvrABC system protein C (Coxiella burnetii (strain RSA 331 / Henzerling II)).